The sequence spans 517 residues: Crotonobetaine/carnitine--CoA ligase (517 aa).

Belongs to the ATP-dependent AMP-binding enzyme family.

The catalysed reaction is 4-(trimethylamino)butanoate + ATP + CoA = 4-(trimethylamino)butanoyl-CoA + AMP + diphosphate. It catalyses the reaction crotonobetaine + ATP + CoA = crotonobetainyl-CoA + AMP + diphosphate. The enzyme catalyses (R)-carnitine + ATP + CoA = (R)-carnitinyl-CoA + AMP + diphosphate. Its pathway is amine and polyamine metabolism; carnitine metabolism. In terms of biological role, catalyzes the transfer of CoA to carnitine, generating the initial carnitinyl-CoA needed for the CaiB reaction cycle. Also has activity toward crotonobetaine and gamma-butyrobetaine. The polypeptide is Crotonobetaine/carnitine--CoA ligase (Escherichia coli O17:K52:H18 (strain UMN026 / ExPEC)).